The primary structure comprises 200 residues: Phosphatidylethanolamine N-methyltransferase B (200 aa).

At 1-8 (MEKGLSSD) the chain is on the lumenal side. The helical intramembrane region spans 9 to 29 (LIIAFVAIVLHVVNYNVTAQF). At 30 to 39 (EYKTRYFTKL) the chain is on the lumenal side. A helical transmembrane segment spans residues 40 to 58 (IGRNAIYYYAVFLIISALI). Over 59–86 (RDHFINVAVLSDKDSIILFPTEIANMIG) the chain is Cytoplasmic. A helical transmembrane segment spans residues 87 to 107 (DSCFIFGILLNIWTLKALGIK). 91-93 (IFG) contributes to the S-adenosyl-L-methionine binding site. At 108 to 150 (GMYNGDSFGHIMDSPVTGGPYQFFSDPQYVGTTIAALGVAIRN) the chain is on the lumenal side. A helical transmembrane segment spans residues 151 to 171 (QSIYGFLCTILVGVVFYISAT). Over 172-200 (FVETPHLKNIYSNRSYSKINFKNLKSLKN) the chain is Cytoplasmic. 174–175 (ET) is an S-adenosyl-L-methionine binding site.

Belongs to the class VI-like SAM-binding methyltransferase superfamily. PEMT/PEM2 methyltransferase family.

It localises to the endoplasmic reticulum membrane. It is found in the mitochondrion membrane. It carries out the reaction a 1,2-diacyl-sn-glycero-3-phospho-N-methylethanolamine + S-adenosyl-L-methionine = a 1,2-diacyl-sn-glycero-3-phospho-N,N-dimethylethanolamine + S-adenosyl-L-homocysteine + H(+). The catalysed reaction is a 1,2-diacyl-sn-glycero-3-phospho-N,N-dimethylethanolamine + S-adenosyl-L-methionine = a 1,2-diacyl-sn-glycero-3-phosphocholine + S-adenosyl-L-homocysteine + H(+). It catalyses the reaction a 1,2-diacyl-sn-glycero-3-phosphoethanolamine + S-adenosyl-L-methionine = a 1,2-diacyl-sn-glycero-3-phospho-N-methylethanolamine + S-adenosyl-L-homocysteine + H(+). Its pathway is phospholipid metabolism; phosphatidylcholine biosynthesis. Functionally, catalyzes the three sequential steps of the methylation pathway of phosphatidylcholine biosynthesis, the SAM-dependent methylation of phosphatidylethanolamine (PE) to phosphatidylmonomethylethanolamine (PMME), PMME to phosphatidyldimethylethanolamine (PDME), and PDME to phosphatidylcholine (PC). The sequence is that of Phosphatidylethanolamine N-methyltransferase B (pemtB) from Dictyostelium discoideum (Social amoeba).